The chain runs to 194 residues: ATP-dependent Clp protease proteolytic subunit (194 aa).

S97 (nucleophile) is an active-site residue. H122 is an active-site residue.

It belongs to the peptidase S14 family. Fourteen ClpP subunits assemble into 2 heptameric rings which stack back to back to give a disk-like structure with a central cavity, resembling the structure of eukaryotic proteasomes.

The protein localises to the cytoplasm. It carries out the reaction Hydrolysis of proteins to small peptides in the presence of ATP and magnesium. alpha-casein is the usual test substrate. In the absence of ATP, only oligopeptides shorter than five residues are hydrolyzed (such as succinyl-Leu-Tyr-|-NHMec, and Leu-Tyr-Leu-|-Tyr-Trp, in which cleavage of the -Tyr-|-Leu- and -Tyr-|-Trp bonds also occurs).. Cleaves peptides in various proteins in a process that requires ATP hydrolysis. Has a chymotrypsin-like activity. Plays a major role in the degradation of misfolded proteins. In Thermus thermophilus (strain ATCC BAA-163 / DSM 7039 / HB27), this protein is ATP-dependent Clp protease proteolytic subunit.